A 439-amino-acid polypeptide reads, in one-letter code: Chaperone SurA (439 aa).

The first 27 residues, 1-27 (MRRISSRLSLVLFAALSCATALFPAHA), serve as a signal peptide directing secretion. PpiC domains lie at 180–281 (GEEF…KLLD) and 293–391 (LEQT…QVEA).

The protein localises to the periplasm. It catalyses the reaction [protein]-peptidylproline (omega=180) = [protein]-peptidylproline (omega=0). In terms of biological role, chaperone involved in the correct folding and assembly of outer membrane proteins. Recognizes specific patterns of aromatic residues and the orientation of their side chains, which are found more frequently in integral outer membrane proteins. May act in both early periplasmic and late outer membrane-associated steps of protein maturation. This is Chaperone SurA from Aromatoleum aromaticum (strain DSM 19018 / LMG 30748 / EbN1) (Azoarcus sp. (strain EbN1)).